A 317-amino-acid polypeptide reads, in one-letter code: Transaldolase (317 aa).

Lys126 serves as the catalytic Schiff-base intermediate with substrate.

Belongs to the transaldolase family. Type 1 subfamily. As to quaternary structure, homodimer.

The protein resides in the cytoplasm. The enzyme catalyses D-sedoheptulose 7-phosphate + D-glyceraldehyde 3-phosphate = D-erythrose 4-phosphate + beta-D-fructose 6-phosphate. It participates in carbohydrate degradation; pentose phosphate pathway; D-glyceraldehyde 3-phosphate and beta-D-fructose 6-phosphate from D-ribose 5-phosphate and D-xylulose 5-phosphate (non-oxidative stage): step 2/3. In terms of biological role, transaldolase is important for the balance of metabolites in the pentose-phosphate pathway. The polypeptide is Transaldolase (Paraburkholderia xenovorans (strain LB400)).